We begin with the raw amino-acid sequence, 708 residues long: Probable GTP diphosphokinase RSH3, chloroplastic (708 aa).

2 disordered regions span residues 1–50 (MSLP…AAGG) and 109–134 (HSPV…SWLA). Residues 1-58 (MSLPAISLYTSPPPGAVYSSEFDPSSRGSSPPCSTAPPSTSHRPPAAAGGLSCLFSSP) constitute a chloroplast transit peptide. Low complexity-rich tracts occupy residues 29–41 (SSPP…PSTS) and 118–131 (PSSS…PPAS). Positions 233 to 337 (YLQHCVETAV…IKLADRVHNM (105 aa)) constitute an HD domain.

This sequence belongs to the RelA/SpoT family.

Its subcellular location is the plastid. It is found in the chloroplast. It carries out the reaction GTP + ATP = guanosine 3'-diphosphate 5'-triphosphate + AMP. Probable ppGpp (guanosine 3'-diphosphate 5'-diphosphate) synthetase that may be involved in a rapid plant ppGpp-mediated response to pathogens and other stresses. This chain is Probable GTP diphosphokinase RSH3, chloroplastic (RSH3), found in Oryza sativa subsp. japonica (Rice).